A 122-amino-acid polypeptide reads, in one-letter code: Immunoglobulin lambda variable 4-3 (122 aa).

Positions 1–19 (MAWVSFYLLPFIFSTGLCA) are cleaved as a signal peptide. Positions 20-44 (LPVLTQPPSASALLGASIKLTCTLS) are framework-1. One can recognise an Ig-like domain in the interval 21–122 (PVLTQPPSAS…ESHTIDGQVG (102 aa)). A disulfide bond links Cys41 and Cys111. The interval 45–51 (SEHSTYT) is complementarity-determining-1. Residues 52-68 (IEWYQQRPGRSPQYIMK) form a framework-2 region. Residues 69–75 (VKSDGSH) are complementarity-determining-2. The interval 76-111 (SKGDGIPDRFMGSSSGADRYLTFSNLQSDDEAEYHC) is framework-3. The complementarity-determining-3 stretch occupies residues 112–122 (GESHTIDGQVG).

As to quaternary structure, immunoglobulins are composed of two identical heavy chains and two identical light chains; disulfide-linked.

It is found in the secreted. It localises to the cell membrane. Functionally, v region of the variable domain of immunoglobulin light chains that participates in the antigen recognition. Immunoglobulins, also known as antibodies, are membrane-bound or secreted glycoproteins produced by B lymphocytes. In the recognition phase of humoral immunity, the membrane-bound immunoglobulins serve as receptors which, upon binding of a specific antigen, trigger the clonal expansion and differentiation of B lymphocytes into immunoglobulins-secreting plasma cells. Secreted immunoglobulins mediate the effector phase of humoral immunity, which results in the elimination of bound antigens. The antigen binding site is formed by the variable domain of one heavy chain, together with that of its associated light chain. Thus, each immunoglobulin has two antigen binding sites with remarkable affinity for a particular antigen. The variable domains are assembled by a process called V-(D)-J rearrangement and can then be subjected to somatic hypermutations which, after exposure to antigen and selection, allow affinity maturation for a particular antigen. The sequence is that of Immunoglobulin lambda variable 4-3 from Homo sapiens (Human).